We begin with the raw amino-acid sequence, 863 residues long: Glycerol-3-phosphate acyltransferase (863 aa).

Residues 1–29 (MPKKNSPLLPKETTTTQSSVDTSGSSNLT) form a disordered region. Positions 12 to 29 (ETTTTQSSVDTSGSSNLT) are enriched in polar residues. An HXXXXD motif motif is present at residues 343–348 (SHRSHI).

Belongs to the GPAT/DAPAT family.

It is found in the cell inner membrane. It catalyses the reaction sn-glycerol 3-phosphate + an acyl-CoA = a 1-acyl-sn-glycero-3-phosphate + CoA. It participates in phospholipid metabolism; CDP-diacylglycerol biosynthesis; CDP-diacylglycerol from sn-glycerol 3-phosphate: step 1/3. This chain is Glycerol-3-phosphate acyltransferase, found in Xylella fastidiosa (strain M12).